The primary structure comprises 221 residues: ATP synthase subunit a 1 (221 aa).

The next 5 membrane-spanning stretches (helical) occupy residues 20-40 (LTIVTTWALMLLLAGGSALIT), 78-98 (YLPFIAALFLFIATANLCTVI), 108-128 (LSTTAALALSVFIAVPLFGIA), 174-194 (MILVILLTISPLVFPVLMNIL), and 196-216 (LLTGMVQAYIFSILATVYIAA).

Belongs to the ATPase A chain family. In terms of assembly, F-type ATPases have 2 components, CF(1) - the catalytic core - and CF(0) - the membrane proton channel. CF(1) has five subunits: alpha(3), beta(3), gamma(1), delta(1), epsilon(1). CF(0) has four main subunits: a, b, b' and c.

It is found in the cell inner membrane. In terms of biological role, key component of the proton channel; it plays a direct role in the translocation of protons across the membrane. In Chlorobaculum tepidum (strain ATCC 49652 / DSM 12025 / NBRC 103806 / TLS) (Chlorobium tepidum), this protein is ATP synthase subunit a 1.